The following is a 138-amino-acid chain: Probable phospholipase A2 homolog 1 (138 aa).

Residues 1–21 form the signal peptide; sequence MPPRSPLLALVFLAAGVLSSA. 6 cysteine pairs are disulfide-bonded: C29-C56, C33-C62, C38-C109, C49-C69, C68-C93, and C75-C86. Ca(2+)-binding residues include Y48, G50, and W53. The active site involves H72. D73 contacts Ca(2+).

The protein belongs to the phospholipase A2 family. It depends on Ca(2+) as a cofactor.

The protein localises to the secreted. It carries out the reaction a 1,2-diacyl-sn-glycero-3-phosphocholine + H2O = a 1-acyl-sn-glycero-3-phosphocholine + a fatty acid + H(+). PA2 catalyzes the calcium-dependent hydrolysis of the 2-acyl groups in 3-sn-phosphoglycerides. Releases lysophospholipids (LPLs) and free fatty acids (FFAs) from membrane phospholipids in response to hormones and other external stimuli. In Oryza sativa subsp. japonica (Rice), this protein is Probable phospholipase A2 homolog 1 (PLA2-I).